The sequence spans 872 residues: Alanine--tRNA ligase (872 aa).

The Zn(2+) site is built by His-561, His-565, Cys-662, and His-666.

Belongs to the class-II aminoacyl-tRNA synthetase family. It depends on Zn(2+) as a cofactor.

It localises to the cytoplasm. The catalysed reaction is tRNA(Ala) + L-alanine + ATP = L-alanyl-tRNA(Ala) + AMP + diphosphate. In terms of biological role, catalyzes the attachment of alanine to tRNA(Ala) in a two-step reaction: alanine is first activated by ATP to form Ala-AMP and then transferred to the acceptor end of tRNA(Ala). Also edits incorrectly charged Ser-tRNA(Ala) and Gly-tRNA(Ala) via its editing domain. The sequence is that of Alanine--tRNA ligase from Thiobacillus denitrificans (strain ATCC 25259 / T1).